A 398-amino-acid polypeptide reads, in one-letter code: Acetate kinase (398 aa).

Residue Asn10 coordinates Mg(2+). ATP is bound at residue Lys17. A substrate-binding site is contributed by Arg91. Asp148 functions as the Proton donor/acceptor in the catalytic mechanism. Residues 208–212 (HLGNG), 283–285 (DCR), and 331–335 (GIGEN) each bind ATP. Residue Glu385 coordinates Mg(2+).

This sequence belongs to the acetokinase family. Homodimer. Mg(2+) is required as a cofactor. It depends on Mn(2+) as a cofactor.

The protein resides in the cytoplasm. The catalysed reaction is acetate + ATP = acetyl phosphate + ADP. It functions in the pathway metabolic intermediate biosynthesis; acetyl-CoA biosynthesis; acetyl-CoA from acetate: step 1/2. In terms of biological role, catalyzes the formation of acetyl phosphate from acetate and ATP. Can also catalyze the reverse reaction. The sequence is that of Acetate kinase from Shewanella pealeana (strain ATCC 700345 / ANG-SQ1).